A 63-amino-acid chain; its full sequence is uncharacterized protein (63 aa).

The chain crosses the membrane as a helical span at residues 3-23; the sequence is IIYIILGFLSLAIGIIGIFPS.

It localises to the membrane. This is an uncharacterized protein from Haemophilus influenzae (strain ATCC 51907 / DSM 11121 / KW20 / Rd).